We begin with the raw amino-acid sequence, 126 residues long: Large ribosomal subunit protein bL12 (126 aa).

It belongs to the bacterial ribosomal protein bL12 family. Homodimer. Part of the ribosomal stalk of the 50S ribosomal subunit. Forms a multimeric L10(L12)X complex, where L10 forms an elongated spine to which 2 to 4 L12 dimers bind in a sequential fashion. Binds GTP-bound translation factors.

Functionally, forms part of the ribosomal stalk which helps the ribosome interact with GTP-bound translation factors. Is thus essential for accurate translation. This chain is Large ribosomal subunit protein bL12, found in Moorella thermoacetica (strain ATCC 39073 / JCM 9320).